The following is a 136-amino-acid chain: 6,7-dimethyl-8-ribityllumazine synthase (136 aa).

Residues Phe-11, 43–45, and 67–69 each bind 5-amino-6-(D-ribitylamino)uracil; these read SFD and AVI. Residue 72–73 participates in (2S)-2-hydroxy-3-oxobutyl phosphate binding; sequence ET. Catalysis depends on His-75, which acts as the Proton donor. 5-amino-6-(D-ribitylamino)uracil is bound at residue Leu-100. Arg-115 provides a ligand contact to (2S)-2-hydroxy-3-oxobutyl phosphate.

It belongs to the DMRL synthase family.

The catalysed reaction is (2S)-2-hydroxy-3-oxobutyl phosphate + 5-amino-6-(D-ribitylamino)uracil = 6,7-dimethyl-8-(1-D-ribityl)lumazine + phosphate + 2 H2O + H(+). It participates in cofactor biosynthesis; riboflavin biosynthesis; riboflavin from 2-hydroxy-3-oxobutyl phosphate and 5-amino-6-(D-ribitylamino)uracil: step 1/2. Its function is as follows. Catalyzes the formation of 6,7-dimethyl-8-ribityllumazine by condensation of 5-amino-6-(D-ribitylamino)uracil with 3,4-dihydroxy-2-butanone 4-phosphate. This is the penultimate step in the biosynthesis of riboflavin. This Picrophilus torridus (strain ATCC 700027 / DSM 9790 / JCM 10055 / NBRC 100828 / KAW 2/3) protein is 6,7-dimethyl-8-ribityllumazine synthase.